Here is a 100-residue protein sequence, read N- to C-terminus: Urease subunit gamma 1 (100 aa).

This sequence belongs to the urease gamma subunit family. As to quaternary structure, heterotrimer of UreA (gamma), UreB (beta) and UreC (alpha) subunits. Three heterotrimers associate to form the active enzyme.

Its subcellular location is the cytoplasm. The catalysed reaction is urea + 2 H2O + H(+) = hydrogencarbonate + 2 NH4(+). It functions in the pathway nitrogen metabolism; urea degradation; CO(2) and NH(3) from urea (urease route): step 1/1. Functionally, disruption of the ure1 gene cluster suggests that it protects brucellae during their passage through the stomach. The major route of infection in human brucellosis is oral. This chain is Urease subunit gamma 1, found in Brucella abortus (strain 2308).